Reading from the N-terminus, the 385-residue chain is tRNA pseudouridine synthase D (385 aa).

The active-site Nucleophile is aspartate 65. Positions 143–345 constitute a TRUD domain; it reads GCENYFGEQR…SDGVRKAFFK (203 aa).

Belongs to the pseudouridine synthase TruD family.

The enzyme catalyses uridine(13) in tRNA = pseudouridine(13) in tRNA. In terms of biological role, responsible for synthesis of pseudouridine from uracil-13 in transfer RNAs. The chain is tRNA pseudouridine synthase D from Aquifex aeolicus (strain VF5).